The following is a 188-amino-acid chain: Peptidyl-tRNA hydrolase (188 aa).

A tRNA-binding site is contributed by Tyr14. The active-site Proton acceptor is the His19. Residues Tyr64, Asn66, and Asn113 each contribute to the tRNA site.

Belongs to the PTH family. Monomer.

It is found in the cytoplasm. It carries out the reaction an N-acyl-L-alpha-aminoacyl-tRNA + H2O = an N-acyl-L-amino acid + a tRNA + H(+). Hydrolyzes ribosome-free peptidyl-tRNAs (with 1 or more amino acids incorporated), which drop off the ribosome during protein synthesis, or as a result of ribosome stalling. Functionally, catalyzes the release of premature peptidyl moieties from peptidyl-tRNA molecules trapped in stalled 50S ribosomal subunits, and thus maintains levels of free tRNAs and 50S ribosomes. The sequence is that of Peptidyl-tRNA hydrolase from Chloroflexus aurantiacus (strain ATCC 29364 / DSM 637 / Y-400-fl).